The following is a 295-amino-acid chain: Pantothenate synthetase (295 aa).

The active-site Proton donor is the histidine 37. Residue glutamine 61 participates in (R)-pantoate binding. A beta-alanine-binding site is contributed by glutamine 61. 154-157 contributes to the ATP binding site; it reads GRKD. Glutamine 160 is a binding site for (R)-pantoate. Residues valine 183 and 191-194 each bind ATP; that span reads QSSR.

This sequence belongs to the pantothenate synthetase family. In terms of assembly, homodimer.

It localises to the cytoplasm. The enzyme catalyses (R)-pantoate + beta-alanine + ATP = (R)-pantothenate + AMP + diphosphate + H(+). It functions in the pathway cofactor biosynthesis; (R)-pantothenate biosynthesis; (R)-pantothenate from (R)-pantoate and beta-alanine: step 1/1. Functionally, catalyzes the condensation of pantoate with beta-alanine in an ATP-dependent reaction via a pantoyl-adenylate intermediate. The chain is Pantothenate synthetase from Salinibacter ruber (strain DSM 13855 / M31).